The sequence spans 502 residues: Probable cytosol aminopeptidase (502 aa).

Residues Lys-267 and Asp-272 each contribute to the Mn(2+) site. Residue Lys-279 is part of the active site. The Mn(2+) site is built by Asp-290, Asp-349, and Glu-351. Arg-353 is a catalytic residue.

The protein belongs to the peptidase M17 family. Requires Mn(2+) as cofactor.

The protein resides in the cytoplasm. It catalyses the reaction Release of an N-terminal amino acid, Xaa-|-Yaa-, in which Xaa is preferably Leu, but may be other amino acids including Pro although not Arg or Lys, and Yaa may be Pro. Amino acid amides and methyl esters are also readily hydrolyzed, but rates on arylamides are exceedingly low.. The enzyme catalyses Release of an N-terminal amino acid, preferentially leucine, but not glutamic or aspartic acids.. Functionally, presumably involved in the processing and regular turnover of intracellular proteins. Catalyzes the removal of unsubstituted N-terminal amino acids from various peptides. The protein is Probable cytosol aminopeptidase of Aeromonas hydrophila subsp. hydrophila (strain ATCC 7966 / DSM 30187 / BCRC 13018 / CCUG 14551 / JCM 1027 / KCTC 2358 / NCIMB 9240 / NCTC 8049).